A 416-amino-acid polypeptide reads, in one-letter code: WD repeat-containing protein JIP5 (416 aa).

WD repeat units follow at residues Pro-9–Lys-48, Arg-62–Lys-101, and Gly-112–Ser-151. Residues Glu-149 to Lys-183 form a disordered region. Residues Ser-166–Ser-179 show a composition bias toward low complexity. 3 WD repeats span residues Ile-214 to Glu-255, Asp-264 to Leu-308, and Ser-309 to Asn-348. Composition is skewed to acidic residues over residues Ser-343–Asn-359 and Ser-374–Asp-383. A disordered region spans residues Ser-343 to Asp-416. A compositionally biased stretch (basic residues) spans Lys-389 to Gly-400.

This sequence belongs to the WD repeat WDR55 family.

The protein resides in the nucleus. It is found in the nucleolus. In Coccidioides immitis (strain RS) (Valley fever fungus), this protein is WD repeat-containing protein JIP5 (JIP5).